Reading from the N-terminus, the 508-residue chain is Protein MGF 505-9R (508 aa).

3 ANK repeats span residues 54–83 (SINL…NLHY), 253–282 (QVDT…RKTV), and 313–343 (IIKK…KINL).

It belongs to the asfivirus MGF 505 family.

Its function is as follows. Plays a role in virus cell tropism, and may be required for efficient virus replication in macrophages. This is Protein MGF 505-9R from Ornithodoros (relapsing fever ticks).